The primary structure comprises 283 residues: MESFKYCFDNDGKKWIIGNTLYSGNSILYKVRKNFTSSFYNYVMKIDHKSHKPLLSEIRFYISVLDPLTIDNWTRERGIKYLAIPDLYGIGETDDYMFFVIKNLGRVFAPKDTESVFEACVTMINTLEFIHSQGFTHGKIEPRNILIRNKRLSLIDYSRTNKLYKSGNSHIDYNEDMITSGNINYMCVDNHLGATVSRRGDLEMLGYCMIEWFGGKLPWKNESSIKVIKQKKEYKKFIATFFEDCFPEGNEPLELVRYIELVYTLDYSQTPNYDRLRKLFIQD.

The ATP site is built by Met-1 and Lys-30. In terms of domain architecture, Protein kinase spans 1 to 283 (MESFKYCFDN…DRLRKLFIQD (283 aa)).

It belongs to the protein kinase superfamily. Ser/Thr protein kinase family. Poxviruses subfamily. In terms of assembly, interacts with B1/VPK1. Interacts with host VRK1. Interacts with host VRK2.

It localises to the host nucleus. Both catalytically active kinases B1/VPK1 and host VRK2 repress B12 inhibitory activity in a B1/VPK1 deletion mutant strain. Its function is as follows. Pseudokinase that plays a role in viral DNA replication repression by activating the antiviral protein BANF1 and inhibiting the activity of host VRK1, a cellular modulator of BANF1. The chain is Pseudokinase OPG198 (OPG198) from Vaccinia virus (strain Western Reserve) (VACV).